Here is a 358-residue protein sequence, read N- to C-terminus: NAC domain-containing protein 12 (358 aa).

The 162-residue stretch at 16–177 (VPPGFRFHPT…GWVVCRVFRK (162 aa)) folds into the NAC domain. A DNA-binding region spans residues 116-183 (IGLRKTLVFY…VFRKKNYQKI (68 aa)).

In terms of tissue distribution, stems and roots, specifically in interfascicular fibers (sclerenchyma), cells differentiating into vascular vessels (cambium), and xylem.

The protein resides in the nucleus. In terms of biological role, transcriptional activator of genes involved in biosynthesis of secondary walls. Together with NST1, required for the secondary cell wall thickening and lignification of sclerenchymatous fibers and secondary xylem vessels (tracheary elements). Seems to repress the secondary cell wall thickening of xylary fibers. May also regulate the secondary cell wall lignification of other tissues. Binds to and activates the promoter of MYB46. The chain is NAC domain-containing protein 12 from Arabidopsis thaliana (Mouse-ear cress).